Here is a 388-residue protein sequence, read N- to C-terminus: tRNA (guanine(26)-N(2))-dimethyltransferase (388 aa).

The Trm1 methyltransferase domain maps to 4–383; it reads RTIVEGTTKI…APIAEIKKII (380 aa). Residues R41, R78, D94, and A123 each coordinate S-adenosyl-L-methionine. Residues C251, C254, C271, and C274 each contribute to the Zn(2+) site.

It belongs to the class I-like SAM-binding methyltransferase superfamily. Trm1 family.

It catalyses the reaction guanosine(26) in tRNA + 2 S-adenosyl-L-methionine = N(2)-dimethylguanosine(26) in tRNA + 2 S-adenosyl-L-homocysteine + 2 H(+). Functionally, dimethylates a single guanine residue at position 26 of a number of tRNAs using S-adenosyl-L-methionine as donor of the methyl groups. This Methanosarcina mazei (strain ATCC BAA-159 / DSM 3647 / Goe1 / Go1 / JCM 11833 / OCM 88) (Methanosarcina frisia) protein is tRNA (guanine(26)-N(2))-dimethyltransferase.